A 125-amino-acid polypeptide reads, in one-letter code: Large ribosomal subunit protein bL20 (125 aa).

The protein belongs to the bacterial ribosomal protein bL20 family.

Its function is as follows. Binds directly to 23S ribosomal RNA and is necessary for the in vitro assembly process of the 50S ribosomal subunit. It is not involved in the protein synthesizing functions of that subunit. This is Large ribosomal subunit protein bL20 from Methylobacterium nodulans (strain LMG 21967 / CNCM I-2342 / ORS 2060).